A 507-amino-acid chain; its full sequence is BPI fold-containing family C protein (507 aa).

An N-terminal signal peptide occupies residues 1 to 23 (MCTKTIPVLWGCFLLWNLYVSSS). Residues asparagine 79, asparagine 92, and asparagine 113 are each glycosylated (N-linked (GlcNAc...) asparagine). A disulfide bridge connects residues cysteine 161 and cysteine 200. Asparagine 213, asparagine 225, asparagine 257, asparagine 301, asparagine 355, asparagine 372, and asparagine 415 each carry an N-linked (GlcNAc...) asparagine glycan.

The protein belongs to the BPI/LBP/Plunc superfamily. BPI/LBP family. Detected in the basal layer of the epidermis from inflammatory skin from psoriasis patients, but not in normal skin.

The protein localises to the secreted. This Homo sapiens (Human) protein is BPI fold-containing family C protein (BPIFC).